A 697-amino-acid chain; its full sequence is Histone-lysine N-methyltransferase SETDB2 (697 aa).

One can recognise an MBD domain in the interval 172–242; it reads LKKENPLNLP…DNFSFSTQVQ (71 aa). The region spanning 304–378 is the Pre-SET domain; sequence KCCSCTDGCL…LCQNRVVQHG (75 aa). Zn(2+) contacts are provided by Cys-306, Cys-308, Cys-312, Cys-318, Cys-320, Cys-359, Cys-363, Cys-365, and Cys-370. In terms of domain architecture, SET spans 381-672; that stretch reads LRLQVFKTDT…AGTELTWDYN (292 aa). Position 391–393 (391–393) interacts with S-adenosyl-L-methionine; it reads KGW. 2 disordered regions span residues 438–461 and 529–605; these read KEDN…HSDS and VHNS…STSP. Residues 565-581 are compositionally biased toward low complexity; sequence SGYVSEESSSSVISGGH. S-adenosyl-L-methionine contacts are provided by residues Arg-626 and 629–630; that span reads NH. Positions 632, 685, 687, and 692 each coordinate Zn(2+).

The protein belongs to the class V-like SAM-binding methyltransferase superfamily.

The protein localises to the nucleus. It localises to the chromosome. It carries out the reaction N(6),N(6)-dimethyl-L-lysyl(9)-[histone H3] + S-adenosyl-L-methionine = N(6),N(6),N(6)-trimethyl-L-lysyl(9)-[histone H3] + S-adenosyl-L-homocysteine + H(+). In terms of biological role, histone methyltransferase involved in left-right axis specification in early development and mitosis. Specifically trimethylates 'Lys-9' of histone H3 (H3K9me3). H3K9me3 represents a specific tag for epigenetic transcriptional repression by recruiting HP1 (CBX1, CBX3 and/or CBX5) proteins to methylated histones. Contributes to H3K9me3 in both the interspersed repetitive elements and centromere-associated repeats. Plays a role in chromosome condensation and segregation during mitosis. The sequence is that of Histone-lysine N-methyltransferase SETDB2 (setdb2) from Xenopus tropicalis (Western clawed frog).